Consider the following 122-residue polypeptide: Protein POLR1D, isoform 2 (122 aa).

Met-1 carries the N-acetylmethionine modification. Residues 48–122 (INTIKNTLPS…DKYEKRSNRR (75 aa)) form a disordered region. Residues 57 to 83 (SHKEQDHEQKEGDKEPAKSQAQKEENP) show a composition bias toward basic and acidic residues. The segment covering 84 to 96 (KKHRSHPYKHSFR) has biased composition (basic residues). At Ser-104 the chain carries Phosphoserine. Residues 110-122 (SSQDKYEKRSNRR) show a composition bias toward basic and acidic residues.

This is Protein POLR1D, isoform 2 (POLR1D) from Homo sapiens (Human).